We begin with the raw amino-acid sequence, 453 residues long: MSHSTFSHLFSPHFGAPVYSPVSSRIGGRYVSSSVPTRSVDFRSRSSAPAPRLSYDKVDFSSAEAINQEFFATRSNEKRELQELNDRFASFIEKVRHLEQQNSKLILELGQYKDQHQGSTGRINELCQQEMRELRRQLELMAKDRDQMQVERDNLAEDVALLNQRLNEEMGKRQEAENNLTLFRKDVDDATLARLELERKIESLMDEIEFLKKMHDEEIQDVQVSVQSQQMKMEVMETSSRPDLTGALRDIRAQYESIATKNMQESEEWYKSKFADLTDSAKRNAEAMRQGKQENNDLRRQIQAQNCDIDSLKRTNEALLRQMREMEEQFAAEARNYQDTVSRLEDEIRNLKEEMSRHLREYQDLLNVKMALDIEIATYRKLLEGEENRIVVPIMKMPSMSGYSGDYGQFSDTRAGQKVVIKTVETRDGEVVKESTKEKGRDEKKDSHGQGKD.

The segment at 1 to 51 (MSHSTFSHLFSPHFGAPVYSPVSSRIGGRYVSSSVPTRSVDFRSRSSAPAP) is head. The coil 1A stretch occupies residues 71–112 (FATRSNEKRELQELNDRFASFIEKVRHLEQQNSKLILELGQY). The IF rod domain occupies 77-390 (EKRELQELND…KLLEGEENRI (314 aa)). Residues 113-126 (KDQHQGSTGRINEL) form a linker 1 region. Residues 127 to 222 (CQQEMRELRR…KMHDEEIQDV (96 aa)) form a coil 1B region. The interval 223 to 245 (QVSVQSQQMKMEVMETSSRPDLT) is linker 12. Positions 246–391 (GALRDIRAQY…LLEGEENRIV (146 aa)) are coil 2. A tail region spans residues 392–453 (VPIMKMPSMS…KKDSHGQGKD (62 aa)). A disordered region spans residues 421 to 453 (IKTVETRDGEVVKESTKEKGRDEKKDSHGQGKD). The segment covering 424–453 (VETRDGEVVKESTKEKGRDEKKDSHGQGKD) has biased composition (basic and acidic residues).

This sequence belongs to the intermediate filament family. Optic nerve.

In terms of biological role, type III neurofilament. The sequence is that of Plasticin from Carassius auratus (Goldfish).